Here is a 441-residue protein sequence, read N- to C-terminus: MSGTGQSDDPRELKAGGSLQGRVKVPGDKSISHRSLLFGAIAEGTTTIDGLLPAEDPLSTAACLRAMGVSISPITDGGIVTVEGVGVDGLQEPAEVLDCGNSGTTMRLMLGLLAGRDGRHFVLDGDASLRRRPMRRVGQPLASMGAEVRGRDGGNLAPLAVQGRQLKGTVIGTPVASAQVKSALLLAALTAESPTTVIEPAQSRDHSERMLKAFGADLTVGGEIGRHISVRPGATLQGKNVVVPGDISSAAFWLVAGALIPGADLTIENVGLNPTRTGILEVLEQMGALIEVLNPRDVAGEPVGDLRVTHGPLKPFNFGEEIMPSLVDEVPILSVAACFCEGESRISGASELRVKETDRLAVMARQLKAMGADIDEHEDGMTIRGGRPLKGAALDSETDHRVAMSLGVAAMLADGNSSLARSEAAAVSYPSFWDELERLRC.

Residues 1 to 24 (MSGTGQSDDPRELKAGGSLQGRVK) are disordered. Residues Lys29, Ser30, and Arg34 each contribute to the 3-phosphoshikimate site. Lys29 serves as a coordination point for phosphoenolpyruvate. Positions 103 and 132 each coordinate phosphoenolpyruvate. Positions 177, 179, 328, and 355 each coordinate 3-phosphoshikimate. A phosphoenolpyruvate-binding site is contributed by Gln179. Asp328 functions as the Proton acceptor in the catalytic mechanism. Phosphoenolpyruvate is bound by residues Arg359 and Arg401.

The protein belongs to the EPSP synthase family. Monomer.

It localises to the cytoplasm. It catalyses the reaction 3-phosphoshikimate + phosphoenolpyruvate = 5-O-(1-carboxyvinyl)-3-phosphoshikimate + phosphate. It functions in the pathway metabolic intermediate biosynthesis; chorismate biosynthesis; chorismate from D-erythrose 4-phosphate and phosphoenolpyruvate: step 6/7. Catalyzes the transfer of the enolpyruvyl moiety of phosphoenolpyruvate (PEP) to the 5-hydroxyl of shikimate-3-phosphate (S3P) to produce enolpyruvyl shikimate-3-phosphate and inorganic phosphate. The chain is 3-phosphoshikimate 1-carboxyvinyltransferase from Synechococcus sp. (strain CC9605).